The primary structure comprises 209 residues: Endonuclease III (209 aa).

In terms of domain architecture, HhH spans 108-127; the sequence is RTELESLPGVGRKTANIILN. The [4Fe-4S] cluster site is built by C187, C194, C197, and C203.

This sequence belongs to the Nth/MutY family. It depends on [4Fe-4S] cluster as a cofactor.

It catalyses the reaction 2'-deoxyribonucleotide-(2'-deoxyribose 5'-phosphate)-2'-deoxyribonucleotide-DNA = a 3'-end 2'-deoxyribonucleotide-(2,3-dehydro-2,3-deoxyribose 5'-phosphate)-DNA + a 5'-end 5'-phospho-2'-deoxyribonucleoside-DNA + H(+). DNA repair enzyme that has both DNA N-glycosylase activity and AP-lyase activity. The DNA N-glycosylase activity releases various damaged pyrimidines from DNA by cleaving the N-glycosidic bond, leaving an AP (apurinic/apyrimidinic) site. The AP-lyase activity cleaves the phosphodiester bond 3' to the AP site by a beta-elimination, leaving a 3'-terminal unsaturated sugar and a product with a terminal 5'-phosphate. This Buchnera aphidicola subsp. Schizaphis graminum (strain Sg) protein is Endonuclease III.